Reading from the N-terminus, the 213-residue chain is ATP phosphoribosyltransferase (213 aa).

The protein belongs to the ATP phosphoribosyltransferase family. Short subfamily. Heteromultimer composed of HisG and HisZ subunits.

It is found in the cytoplasm. It carries out the reaction 1-(5-phospho-beta-D-ribosyl)-ATP + diphosphate = 5-phospho-alpha-D-ribose 1-diphosphate + ATP. It functions in the pathway amino-acid biosynthesis; L-histidine biosynthesis; L-histidine from 5-phospho-alpha-D-ribose 1-diphosphate: step 1/9. Catalyzes the condensation of ATP and 5-phosphoribose 1-diphosphate to form N'-(5'-phosphoribosyl)-ATP (PR-ATP). Has a crucial role in the pathway because the rate of histidine biosynthesis seems to be controlled primarily by regulation of HisG enzymatic activity. In Shouchella clausii (strain KSM-K16) (Alkalihalobacillus clausii), this protein is ATP phosphoribosyltransferase.